The chain runs to 211 residues: tRNA (guanine-N(7)-)-methyltransferase (211 aa).

Positions 43, 68, 95, and 117 each coordinate S-adenosyl-L-methionine. Residue D117 is part of the active site. Substrate is bound by residues K121, D153, and 190–193; that span reads TEYE.

The protein belongs to the class I-like SAM-binding methyltransferase superfamily. TrmB family.

The catalysed reaction is guanosine(46) in tRNA + S-adenosyl-L-methionine = N(7)-methylguanosine(46) in tRNA + S-adenosyl-L-homocysteine. It functions in the pathway tRNA modification; N(7)-methylguanine-tRNA biosynthesis. Functionally, catalyzes the formation of N(7)-methylguanine at position 46 (m7G46) in tRNA. In Alkaliphilus oremlandii (strain OhILAs) (Clostridium oremlandii (strain OhILAs)), this protein is tRNA (guanine-N(7)-)-methyltransferase.